The primary structure comprises 416 residues: Probable glucan 1,3-beta-glucosidase A (416 aa).

The N-terminal stretch at 1–22 is a signal peptide; sequence MIFKFSQKALVALYLVVGLAEA. Glu211 (proton donor) is an active-site residue. Disulfide bonds link Cys291–Cys415 and Cys316–Cys342. The active-site Nucleophile is Glu308. A glycan (N-linked (GlcNAc...) asparagine) is linked at Asn344.

The protein belongs to the glycosyl hydrolase 5 (cellulase A) family. Monomer. Mn(2+) serves as cofactor.

It is found in the secreted. It carries out the reaction Successive hydrolysis of beta-D-glucose units from the non-reducing ends of (1-&gt;3)-beta-D-glucans, releasing alpha-glucose.. Beta-glucanases participate in the metabolism of beta-glucan, the main structural component of the cell wall. It could also function biosynthetically as a transglycosylase. In Aspergillus fumigatus (strain ATCC MYA-4609 / CBS 101355 / FGSC A1100 / Af293) (Neosartorya fumigata), this protein is Probable glucan 1,3-beta-glucosidase A (exgA).